A 603-amino-acid chain; its full sequence is Elongation factor 4 (603 aa).

Residues 7 to 189 (SRIRNFSIIA…SIVHLVPPPQ (183 aa)) form the tr-type G domain. Residues 19–24 (DHGKST) and 136–139 (NKID) each bind GTP.

It belongs to the TRAFAC class translation factor GTPase superfamily. Classic translation factor GTPase family. LepA subfamily.

Its subcellular location is the cell inner membrane. It carries out the reaction GTP + H2O = GDP + phosphate + H(+). Its function is as follows. Required for accurate and efficient protein synthesis under certain stress conditions. May act as a fidelity factor of the translation reaction, by catalyzing a one-codon backward translocation of tRNAs on improperly translocated ribosomes. Back-translocation proceeds from a post-translocation (POST) complex to a pre-translocation (PRE) complex, thus giving elongation factor G a second chance to translocate the tRNAs correctly. Binds to ribosomes in a GTP-dependent manner. In Rippkaea orientalis (strain PCC 8801 / RF-1) (Cyanothece sp. (strain PCC 8801)), this protein is Elongation factor 4.